A 515-amino-acid chain; its full sequence is Cyclic AMP receptor-like protein G (515 aa).

Residues 1–16 lie on the Extracellular side of the membrane; it reads MSSIIFIPNDADNINS. The chain crosses the membrane as a helical span at residues 17-37; sequence IMVTISSSLSLVGCLFILSIY. The Cytoplasmic segment spans residues 38 to 50; sequence IYYKELREFQLKL. A helical membrane pass occupies residues 51–71; sequence IFIMTINDFIISIIFLIATHI. The Extracellular segment spans residues 72 to 92; sequence QTKYFDAITNVFPFFCNFPDS. A helical membrane pass occupies residues 93–113; sequence LLHYFFLSSFFWEVCIAHTLI. The Cytoplasmic portion of the chain corresponds to 114–129; sequence QVIKYNNDKVEDNLKK. A helical membrane pass occupies residues 130–150; that stretch reads YFIFSNGLSALIMVSLFFIRS. Topologically, residues 151–164 are extracellular; sequence YSKIDCHHDSIFPH. Residues 165-185 form a helical membrane-spanning segment; sequence LLFFIPLLLTWIYNIIVCALL. At 186 to 276 the chain is on the cytoplasmic side; that stretch reads TKTFKEQAMN…IRKTPNIIWT (91 aa). Residues 277–297 form a helical membrane-spanning segment; that stretch reads SIFFLFSFGFIWSWSILVIIL. Over 298–306 the chain is Extracellular; it reads KYLSLDVKY. A helical membrane pass occupies residues 307-327; the sequence is ILMISYFFIPLHGCMNAVCFG. At 328–515 the chain is on the cytoplasmic side; sequence VNDRLRMNLK…FCTIDEDETK (188 aa). A compositionally biased stretch (low complexity) spans 362–375; sequence NGNNKNNKNNNGAN. Disordered regions lie at residues 362-409 and 469-515; these read NGNN…YYQI and NNNN…DETK. Residues 385 to 396 show a composition bias toward acidic residues; that stretch reads SPDDDDDEDDDN. 2 stretches are compositionally biased toward low complexity: residues 397–407 and 469–504; these read NNNNYSDGNYY and NNNNNNNNNNNNNNNNNNNNNNINNNDNNNNNNNNN.

It belongs to the G-protein coupled receptor 5 family.

Its subcellular location is the membrane. Its function is as follows. Receptor for cAMP. This is Cyclic AMP receptor-like protein G (crlG) from Dictyostelium discoideum (Social amoeba).